The primary structure comprises 242 residues: Glucosamine-6-phosphate deaminase (242 aa).

D67 functions as the Proton acceptor; for enolization step in the catalytic mechanism. The For ring-opening step role is filled by N136. Residue H138 is the Proton acceptor; for ring-opening step of the active site. The For ring-opening step role is filled by E143.

This sequence belongs to the glucosamine/galactosamine-6-phosphate isomerase family. NagB subfamily.

The catalysed reaction is alpha-D-glucosamine 6-phosphate + H2O = beta-D-fructose 6-phosphate + NH4(+). Its pathway is amino-sugar metabolism; N-acetylneuraminate degradation; D-fructose 6-phosphate from N-acetylneuraminate: step 5/5. Functionally, catalyzes the reversible isomerization-deamination of glucosamine 6-phosphate (GlcN6P) to form fructose 6-phosphate (Fru6P) and ammonium ion. The sequence is that of Glucosamine-6-phosphate deaminase from Clostridium perfringens (strain SM101 / Type A).